The sequence spans 307 residues: Ornithine carbamoyltransferase (307 aa).

Carbamoyl phosphate-binding positions include 53–56, Gln-80, Arg-104, and 131–134; these read STRT and HPCQ. L-ornithine contacts are provided by residues Asn-162, Asp-220, and 224–225; that span reads SM. Carbamoyl phosphate-binding positions include 260–261 and Arg-288; that span reads CL.

It belongs to the aspartate/ornithine carbamoyltransferase superfamily. OTCase family.

Its subcellular location is the cytoplasm. The catalysed reaction is carbamoyl phosphate + L-ornithine = L-citrulline + phosphate + H(+). It functions in the pathway amino-acid biosynthesis; L-arginine biosynthesis; L-arginine from L-ornithine and carbamoyl phosphate: step 1/3. Its function is as follows. Reversibly catalyzes the transfer of the carbamoyl group from carbamoyl phosphate (CP) to the N(epsilon) atom of ornithine (ORN) to produce L-citrulline. This is Ornithine carbamoyltransferase from Nitrosomonas eutropha (strain DSM 101675 / C91 / Nm57).